We begin with the raw amino-acid sequence, 335 residues long: Teichoic acids export ATP-binding protein TagH (335 aa).

The region spanning 26 to 246 is the ABC transporter domain; sequence IKGLFMPKSQ…YDEFVKWFNK (221 aa). 60–67 is an ATP binding site; sequence GINGSGKS.

Belongs to the ABC transporter superfamily. Teichoic acids exporter (TC 3.A.1.104.1) family. In terms of assembly, the complex is composed of two ATP-binding proteins (TagH) and two transmembrane proteins (TagG).

It is found in the cell membrane. The enzyme catalyses ATP + H2O + teichoic acidSide 1 = ADP + phosphate + teichoic acidSide 2.. Its function is as follows. Part of the ABC transporter complex TagGH involved in teichoic acids export. Responsible for energy coupling to the transport system. The chain is Teichoic acids export ATP-binding protein TagH from Listeria monocytogenes serotype 4b (strain F2365).